The primary structure comprises 341 residues: Cysteine-rich with EGF-like domain protein 2 (341 aa).

An N-terminal signal peptide occupies residues 1 to 24 (MLLSCSIFRLFCIILLLQLGSIYT). The EGF-like domain occupies 136–178 (DCNTCIGGADRPCHGNGKCDGDGTRAGNGKCSCDEGYDGEFCL). Intrachain disulfides connect cysteine 140–cysteine 154, cysteine 148–cysteine 166, and cysteine 168–cysteine 177. Asparagine 190 is a glycosylation site (N-linked (GlcNAc...) asparagine). FU repeat units lie at residues 193-248 (FFLC…DQYC) and 254-308 (SFSC…NQHC). Residues 291 to 317 (DIDECTEDPASCSDNQHCLNTDGSFSC) form the EGF-like 2; calcium-binding; truncated domain.

It belongs to the CRELD family.

The protein localises to the secreted. The protein resides in the endoplasmic reticulum. Functionally, possible role in neuronal acetylcholine receptor transport. This Danio rerio (Zebrafish) protein is Cysteine-rich with EGF-like domain protein 2 (creld2).